The primary structure comprises 274 residues: UPF0758 protein RHE_CH01848 (274 aa).

The tract at residues 1-37 (MAKGPVATSSDDELPFETEEPVADERSFFGGRPQKPA) is disordered. Residues 10–22 (SDDELPFETEEPV) are compositionally biased toward acidic residues. The region spanning 152–274 (VLSSWSSVIQ…HVSLKGLKLI (123 aa)) is the MPN domain. The Zn(2+) site is built by His223, His225, and Asp236. The short motif at 223-236 (HNHPSGDPTPSRAD) is the JAMM motif element.

This sequence belongs to the UPF0758 family.

The polypeptide is UPF0758 protein RHE_CH01848 (Rhizobium etli (strain ATCC 51251 / DSM 11541 / JCM 21823 / NBRC 15573 / CFN 42)).